We begin with the raw amino-acid sequence, 203 residues long: 8-oxoguanine DNA glycosylase/AP lyase (203 aa).

Active-site residues include K128 and D146.

Belongs to the type-2 OGG1 family.

It carries out the reaction 2'-deoxyribonucleotide-(2'-deoxyribose 5'-phosphate)-2'-deoxyribonucleotide-DNA = a 3'-end 2'-deoxyribonucleotide-(2,3-dehydro-2,3-deoxyribose 5'-phosphate)-DNA + a 5'-end 5'-phospho-2'-deoxyribonucleoside-DNA + H(+). Its function is as follows. Catalyzes the excision of an oxidatively damaged form of guanine (7,8-dihydro-8-oxoguanine = 8-oxoG) from DNA. Also cleaves the DNA backbone at apurinic/apyrimidinic sites (AP sites). The sequence is that of 8-oxoguanine DNA glycosylase/AP lyase from Sulfolobus acidocaldarius (strain ATCC 33909 / DSM 639 / JCM 8929 / NBRC 15157 / NCIMB 11770).